The following is a 700-amino-acid chain: ABC transporter B family member 26, chloroplastic (700 aa).

The transit peptide at 1 to 59 (MAQQVLGCTSRPIRVSLHRCSVITTSDTIRRKNLRFVRNPRLSFSLQSSTRNYRLPSIN) directs the protein to the chloroplast. 3 helical membrane passes run 137–157 (WVIF…ITIP), 182–202 (LVTL…FFGI), and 268–288 (LIYL…ICCI). The ABC transmembrane type-1 domain occupies 139 to 421 (IFAAFSTLIV…VGDNLSSLMQ (283 aa)). The ABC transporter domain maps to 455-694 (IEFVDVSFSY…DGLYARLTKR (240 aa)). 490–497 (GLSGSGKS) contacts ATP.

Belongs to the ABC transporter superfamily. ABCB family. Multidrug resistance exporter (TC 3.A.1.201) subfamily.

The protein resides in the plastid. It is found in the chloroplast membrane. The chain is ABC transporter B family member 26, chloroplastic (ABCB26) from Arabidopsis thaliana (Mouse-ear cress).